The sequence spans 423 residues: MFS-type transporter phiL (423 aa).

3 helical membrane-spanning segments follow: residues 25 to 45, 82 to 102, and 111 to 131; these read IFCFVTYIAANVGLALSNSFI, IGLASVGPIIGPSLGPVLGGV, and YIFVILAAAALIFLFLLIIFF. 2 N-linked (GlcNAc...) asparagine glycosylation sites follow: asparagine 141 and asparagine 151. A disordered region spans residues 166 to 185; that stretch reads DHASGRNLPNAGSKKSNPRN. The next 4 helical transmembrane spans lie at 203–223, 238–258, 298–318, and 321–341; these read VIIFNGLSYAIYYAITSSLSY, LSYIPIGVGTIIAALGNGFVV, IAVPAVVVACISMLGYAWTMS, and LPPIIPLLCLFVFGWGGTAAY. N-linked (GlcNAc...) asparagine glycosylation occurs at asparagine 352. A run of 2 helical transmembrane segments spans residues 369-389 and 390-410; these read LLGAGGAAVIMPLINVLGMGW and TFTAIAGLWVLLSPLVLFLLF.

This sequence belongs to the major facilitator superfamily. CAR1 family.

The protein resides in the membrane. Its function is as follows. MFS-type transporter; part of the gene cluster that mediates the biosynthesis of the antihypercholesterolemic agents phomoidrides which are dimeric anhydrides. The polypeptide is MFS-type transporter phiL (Fungal sp. (strain ATCC 74256)).